A 395-amino-acid chain; its full sequence is Chalcone synthase (395 aa).

At Val2 the chain carries N-acetylvaline. Val2 is modified (N-acetylalanine). Cys169 is an active-site residue.

This sequence belongs to the thiolase-like superfamily. Chalcone/stilbene synthases family.

It catalyses the reaction (E)-4-coumaroyl-CoA + 3 malonyl-CoA + 3 H(+) = 2',4,4',6'-tetrahydroxychalcone + 3 CO2 + 4 CoA. It participates in secondary metabolite biosynthesis; flavonoid biosynthesis. Its function is as follows. The primary product of this enzyme is 4,2',4',6'-tetrahydroxychalcone (also termed naringenin-chalcone or chalcone) which can under specific conditions spontaneously isomerize into naringenin. The polypeptide is Chalcone synthase (CHS) (Arabidopsis thaliana (Mouse-ear cress)).